The primary structure comprises 199 residues: 5'-deoxynucleotidase HDDC2 (199 aa).

Residue alanine 2 is modified to N-acetylalanine. Serine 5 is modified (phosphoserine). An HD domain is found at 41–143; that stretch reads VSDHMYRMAV…VKQLDQCEMI (103 aa). A divalent metal cation is bound by residues histidine 44, histidine 72, aspartate 73, glutamate 76, aspartate 81, isoleucine 82, and aspartate 138. Serine 199 carries the phosphoserine modification.

It belongs to the HDDC2 family. Homodimer. Mn(2+) serves as cofactor. Requires Co(2+) as cofactor. It depends on Mg(2+) as a cofactor.

It catalyses the reaction a 2'-deoxyribonucleoside 5'-phosphate + H2O = a 2'-deoxyribonucleoside + phosphate. Catalyzes the dephosphorylation of the nucleoside 5'-monophosphates deoxyadenosine monophosphate (dAMP), deoxycytidine monophosphate (dCMP), deoxyguanosine monophosphate (dGMP) and deoxythymidine monophosphate (dTMP). The protein is 5'-deoxynucleotidase HDDC2 (Hddc2) of Mus musculus (Mouse).